A 240-amino-acid polypeptide reads, in one-letter code: MSVSRRDVLKFAAATPGVLGLGVVASSLRAAPASAGSLGTLLDYAAGVIPASQIRAAGAVGAIRYVSDRRPGGAWMLGKPIQLSEARDLSGNGLKIVSCYQYGKGSTADWLGGASAGVQHARRGSELHAAAGGPTSAPIYASIDDNPSYEQYKNQIVPYLRSWESVIGHQRTGVYANSKTIDWAVNDGLGSYFWQHNWGSPKGYTHPAAHLHQVEIDKRKVGGVGVDVNQILKPQFGQWA.

Positions 1–33 (MSVSRRDVLKFAAATPGVLGLGVVASSLRAAPA) form a signal peptide, tat-type signal.

In terms of processing, predicted to be exported by the Tat system. The position of the signal peptide cleavage has not been experimentally proven.

The protein resides in the secreted. The catalysed reaction is Hydrolysis of (1-&gt;4)-beta-linkages between N-acetylmuramic acid and N-acetyl-D-glucosamine residues in a peptidoglycan and between N-acetyl-D-glucosamine residues in chitodextrins.. It functions in the pathway cell wall degradation; peptidoglycan degradation. In terms of biological role, may function as a peptidoglycan hydrolase with glycosidase activity. In vitro, displays esterase activity toward p-nitrophenyl esters of various acyl chain length (C4 to C16), with a preference for p-nitrophenyl butyrate (C4). This chain is Putative peptidoglycan hydrolase Rv2525c, found in Mycobacterium tuberculosis (strain ATCC 25618 / H37Rv).